We begin with the raw amino-acid sequence, 3412 residues long: Genome polyprotein (3412 aa).

Topologically, residues 1–104 (MSGRKAQGKT…LSSRKRRSNE (104 aa)) are cytoplasmic. The interval 38-72 (PGPSRGVQGFIFFFLFNILTGKKLTAHLKKLWRML) is hydrophobic; homodimerization of capsid protein C. A propeptide spans 102–121 (SNEMALFPLLLLGLLALSGG) (ER anchor for the capsid protein C, removed in mature form by serine protease NS3). Residues 105-125 (MALFPLLLLGLLALSGGVTLV) form a helical membrane-spanning segment. The Extracellular portion of the chain corresponds to 126–244 (RKNRWLLLNV…GERQLQKIER (119 aa)). N-linked (GlcNAc...) asparagine; by host glycosylation is found at asparagine 134 and asparagine 150. A helical membrane pass occupies residues 245–265 (WLVRNPFFAVTALAIAYLVGN). Residues 266–270 (NTTQR) lie on the Cytoplasmic side of the membrane. A helical membrane pass occupies residues 271–285 (VVIALLVLAVGPAYS). Over 286–730 (AHCIGITDRD…TVFGSAFQGL (445 aa)) the chain is Extracellular. 8 disulfides stabilise this stretch: cysteine 288–cysteine 315, cysteine 345–cysteine 401, cysteine 345–cysteine 406, cysteine 359–cysteine 390, cysteine 377–cysteine 401, cysteine 377–cysteine 406, cysteine 467–cysteine 568, and cysteine 585–cysteine 615. Residues 383 to 396 (DRGWGNGCGLFGKG) form a fusion peptide region. Residues 731-751 (FGGLSWITKVIMGAVLIWVGI) form a helical membrane-spanning segment. The Extracellular portion of the chain corresponds to 752 to 757 (NTRNMT). Residues 758–778 (MSMSMILVGVIMMFLSLGVGA) form a helical membrane-spanning segment. The Extracellular portion of the chain corresponds to 779 to 1132 (DQGCAVNFGK…LVRSWVTAGE (354 aa)). 6 disulfides stabilise this stretch: cysteine 782/cysteine 793, cysteine 833/cysteine 921, cysteine 957/cysteine 1002, cysteine 1058/cysteine 1107, cysteine 1069/cysteine 1091, and cysteine 1090/cysteine 1094. Asparagine 908 and asparagine 986 each carry an N-linked (GlcNAc...) asparagine; by host glycan. The helical transmembrane segment at 1133–1153 (VHAVPFGLVSMMIAMEVVLRR) threads the bilayer. Residues 1154–1201 (RQGPKQMLVGGVVLLGAMLVGQVTVLDLVKFVVAVGLHFHEINNGGDA) are Cytoplasmic-facing. The chain crosses the membrane as a helical span at residues 1202–1222 (MYMALIASFSIRPGLLMGFGL). The Lumenal portion of the chain corresponds to 1223–1287 (RTLWSPRERL…ILPLMALMTP (65 aa)). A helical transmembrane segment spans residues 1288-1308 (MTMHEVRMATMLFCTVVIIGV). Residues 1309–1355 (LHQNSKDTSMQKTIPIVALTLTSYMGLTQPFLGLCAYMSTQVFGRRS) lie on the Cytoplasmic side of the membrane. Residues 1356–1376 (IPVNEALAAAGLVGVLAGLAF) traverse the membrane as a helical segment. Residues 1377–1378 (QD) lie on the Lumenal side of the membrane. The helical transmembrane segment at 1379 to 1399 (MENFLGPIAVGGILMMLVSVA) threads the bilayer. Topologically, residues 1400–1456 (GRVDGLELKKLGEISWEEEAEISGSSSRYDVALSEQGEFKLLSEDKVPWDQIVMTSL) are cytoplasmic. The tract at residues 1407–1446 (LKKLGEISWEEEAEISGSSSRYDVALSEQGEFKLLSEDKV) is interacts with and activates NS3 protease. The segment at residues 1457 to 1477 (ALVGAAIHPFALLLVLGGWIL) is an intramembrane region (helical). Residues 1478-2157 (HIKGARRSGD…RNALSMMPEA (680 aa)) lie on the Cytoplasmic side of the membrane. Positions 1485-1665 (SGDVLWDIPT…ELKEESKEEL (181 aa)) constitute a Peptidase S7 domain. Catalysis depends on charge relay system; for serine protease NS3 activity residues histidine 1537, aspartate 1561, and serine 1622. Residues 1669 to 1825 (PTMLKKGMTT…HSNGEIEDVQ (157 aa)) form the Helicase ATP-binding domain. The segment at 1673-1676 (KKGM) is important for RNA-binding. Position 1682 to 1689 (1682 to 1689 (FHPGAGKT)) interacts with ATP. Residues 1773–1776 (DEAH) carry the DEAH box motif. Residues 1836-1997 (GHEWILADKR…VRGGMVAPLY (162 aa)) form the Helicase C-terminal domain. Lysine 1877 carries the post-translational modification N6-acetyllysine; by host. Residues 1942-1963 (AAQRRGRIGRNPNRDGDSYYYS) are disordered. Residues 2158 to 2178 (MTIVMLFLLAGLLTSGAVIFF) form a helical membrane-spanning segment. At 2179 to 2186 (MSPKGMSR) the chain is on the lumenal side. Positions 2187-2207 (MSMAMGTMAGSGYLMFLGGVK) form an intramembrane region, helical. The Lumenal portion of the chain corresponds to 2208–2209 (PT). The chain crosses the membrane as a helical span at residues 2210–2230 (HISYVMLIFFVLMVVVIPEPG). The Cytoplasmic segment spans residues 2231–2241 (QQRTIQDNQVA). The helical transmembrane segment at 2242–2262 (YLIIGILTLLSVVAANELGML) threads the bilayer. Residues 2263-2293 (EKTKEDFFGKRDITTPSGAIPWSWPDLDLKP) lie on the Lumenal side of the membrane. Positions 2294–2314 (GAAWTVYVGIVTMLSPMLHHW) form an intramembrane region, helical. Topologically, residues 2315-2360 (IKVEYGNLSLSGIAQSASVLSFMDKGIPFMKMNISVVILLVSGWNS) are lumenal. A helical membrane pass occupies residues 2361–2380 (ITVIPLLCGIGGAMLHWTLI). The Cytoplasmic portion of the chain corresponds to 2381–2421 (LPGIKAQQSKLAQKRVFHGVAKNPVVDGNPTADIEEAPEMP). A helical transmembrane segment spans residues 2422–2442 (ALYEKKLALYLLLALSLMSVA). The Lumenal portion of the chain corresponds to 2443–2445 (MCR). Residues 2446-2466 (TPFSLAEGIVLSSAALGPLIE) traverse the membrane as a helical segment. Over 2467-3411 (GNTSLLWNGP…VDADLQPGEL (945 aa)) the chain is Cytoplasmic. Positions 2508 to 2772 (GSASGKTLGE…DVILPIGTRS (265 aa)) constitute an mRNA cap 0-1 NS5-type MT domain. Serine 2563 serves as a coordination point for S-adenosyl-L-methionine. Position 2563 is a phosphoserine (serine 2563). Residue lysine 2568 is the For 2'-O-MTase activity of the active site. S-adenosyl-L-methionine contacts are provided by glycine 2593, tryptophan 2594, threonine 2611, leucine 2612, aspartate 2638, and valine 2639. Aspartate 2653 functions as the For 2'-O-MTase activity in the catalytic mechanism. Isoleucine 2654 contacts S-adenosyl-L-methionine. Active-site for 2'-O-MTase activity residues include lysine 2689 and glutamate 2725. Tyrosine 2727 is a binding site for S-adenosyl-L-methionine. The short motif at 2879-2912 (RKIMKVVNRWLFRHLSREKNPRLCTKEEFIAKVR) is the Nuclear localization signal element. Glutamate 2946, histidine 2950, cysteine 2955, and cysteine 2958 together coordinate Zn(2+). The RdRp catalytic domain maps to 3036–3188 (GGFYADDTAG…RPVDDRFGLA (153 aa)). 3 residues coordinate Zn(2+): histidine 3223, cysteine 3239, and cysteine 3358.

It in the N-terminal section; belongs to the class I-like SAM-binding methyltransferase superfamily. mRNA cap 0-1 NS5-type methyltransferase family. Homodimer. Interacts (via N-terminus) with host EXOC1 (via C-terminus); this interaction results in EXOC1 degradation through the proteasome degradation pathway. As to quaternary structure, forms heterodimers with envelope protein E in the endoplasmic reticulum and Golgi. In terms of assembly, homodimer; in the endoplasmic reticulum and Golgi. Interacts with protein prM. Interacts with non-structural protein 1. Homodimer; Homohexamer when secreted. Interacts with envelope protein E. As to quaternary structure, interacts (via N-terminus) with serine protease NS3. In terms of assembly, forms a heterodimer with serine protease NS3. May form homooligomers. Forms a heterodimer with NS2B. Interacts with non-structural protein 2A (via N-terminus). Interacts with NS4B. Interacts with unphosphorylated RNA-directed RNA polymerase NS5; this interaction stimulates RNA-directed RNA polymerase NS5 guanylyltransferase activity. NS3 interacts with host PDCD6IP; this interaction contributes to virion release. As to quaternary structure, interacts with serine protease NS3. In terms of assembly, homodimer. Interacts with host STAT2; this interaction prevents the establishment of cellular antiviral state. Interacts with serine protease NS3. Interacts with host TRIM23; this interaction leads to NS5 ubiquitination. In terms of processing, specific enzymatic cleavages in vivo yield mature proteins. The nascent capsid protein C contains a C-terminal hydrophobic domain that act as a signal sequence for translocation of prM into the lumen of the ER. Mature capsid protein C is cleaved at a site upstream of this hydrophobic domain by NS3. prM is cleaved in post-Golgi vesicles by a host furin, releasing the mature small envelope protein M, and peptide pr. Non-structural protein 2A-alpha, a C-terminally truncated form of non-structural protein 2A, results from partial cleavage by NS3. Specific enzymatic cleavages in vivo yield mature proteins peptide 2K acts as a signal sequence and is removed from the N-terminus of NS4B by the host signal peptidase in the ER lumen. Signal cleavage at the 2K-4B site requires a prior NS3 protease-mediated cleavage at the 4A-2K site. Cleaved in post-Golgi vesicles by a host furin, releasing the mature small envelope protein M, and peptide pr. This cleavage is incomplete as up to 30% of viral particles still carry uncleaved prM. Post-translationally, N-glycosylated. In terms of processing, N-glycosylated. The excreted form is glycosylated and this is required for efficient secretion of the protein from infected cells. Polyubiquitinated; ubiquitination is probably mediated by host TRIM23 and is prerequisite for NS5-STAT2 interaction. NS5 is not ISGylated or sumoylated. Post-translationally, acetylated by host KAT5. Acetylation modulates NS3 RNA-binding and unwinding activities and plays an important positive role for viral replication. In terms of processing, phosphorylated on serines residues. This phosphorylation may trigger NS5 nuclear localization.

The protein resides in the virion. Its subcellular location is the host nucleus. It localises to the host cytoplasm. It is found in the host perinuclear region. The protein localises to the secreted. The protein resides in the virion membrane. Its subcellular location is the host endoplasmic reticulum membrane. It carries out the reaction Selective hydrolysis of -Xaa-Xaa-|-Yaa- bonds in which each of the Xaa can be either Arg or Lys and Yaa can be either Ser or Ala.. It catalyses the reaction RNA(n) + a ribonucleoside 5'-triphosphate = RNA(n+1) + diphosphate. The enzyme catalyses a ribonucleoside 5'-triphosphate + H2O = a ribonucleoside 5'-diphosphate + phosphate + H(+). The catalysed reaction is ATP + H2O = ADP + phosphate + H(+). It carries out the reaction a 5'-end (5'-triphosphoguanosine)-ribonucleoside in mRNA + S-adenosyl-L-methionine = a 5'-end (N(7)-methyl 5'-triphosphoguanosine)-ribonucleoside in mRNA + S-adenosyl-L-homocysteine. It catalyses the reaction a 5'-end (N(7)-methyl 5'-triphosphoguanosine)-ribonucleoside in mRNA + S-adenosyl-L-methionine = a 5'-end (N(7)-methyl 5'-triphosphoguanosine)-(2'-O-methyl-ribonucleoside) in mRNA + S-adenosyl-L-homocysteine + H(+). In terms of biological role, plays a role in virus budding by binding to the cell membrane and gathering the viral RNA into a nucleocapsid that forms the core of a mature virus particle. During virus entry, may induce genome penetration into the host cytoplasm after hemifusion induced by the surface proteins. Can migrate to the cell nucleus where it modulates host functions. Inhibits RNA silencing by interfering with host Dicer. Functionally, prevents premature fusion activity of envelope proteins in trans-Golgi by binding to envelope protein E at pH6.0. After virion release in extracellular space, gets dissociated from E dimers. Its function is as follows. Acts as a chaperone for envelope protein E during intracellular virion assembly by masking and inactivating envelope protein E fusion peptide. prM is the only viral peptide matured by host furin in the trans-Golgi network probably to avoid catastrophic activation of the viral fusion activity in acidic Golgi compartment prior to virion release. prM-E cleavage is inefficient, and many virions are only partially matured. These uncleaved prM would play a role in immune evasion. In terms of biological role, may play a role in virus budding. Exerts cytotoxic effects by activating a mitochondrial apoptotic pathway through M ectodomain. May display a viroporin activity. Binds to host cell surface receptor and mediates fusion between viral and cellular membranes. Envelope protein is synthesized in the endoplasmic reticulum in the form of heterodimer with protein prM. They play a role in virion budding in the ER, and the newly formed immature particle is covered with 60 spikes composed of heterodimer between precursor prM and envelope protein E. The virion is transported to the Golgi apparatus where the low pH causes dissociation of PrM-E heterodimers and formation of E homodimers. prM-E cleavage is inefficient, and many virions are only partially matured. These uncleaved prM would play a role in immune evasion. Functionally, involved in immune evasion, pathogenesis and viral replication. Once cleaved off the polyprotein, is targeted to three destinations: the viral replication cycle, the plasma membrane and the extracellular compartment. Essential for viral replication. Required for formation of the replication complex and recruitment of other non-structural proteins to the ER-derived membrane structures. Excreted as a hexameric lipoparticle that plays a role against host immune response. Antagonizing the complement function. Binds to the host macrophages and dendritic cells. Inhibits signal transduction originating from Toll-like receptor 3 (TLR3). Its function is as follows. Component of the viral RNA replication complex that functions in virion assembly and antagonizes the host immune response. In terms of biological role, required cofactor for the serine protease function of NS3. May have membrane-destabilizing activity and form viroporins. Displays three enzymatic activities: serine protease, NTPase and RNA helicase. NS3 serine protease, in association with NS2B, performs its autocleavage and cleaves the polyprotein at dibasic sites in the cytoplasm: C-prM, NS2A-NS2B, NS2B-NS3, NS3-NS4A, NS4A-2K and NS4B-NS5. NS3 RNA helicase binds RNA and unwinds dsRNA in the 3' to 5' direction. Also plays a role in virus assembly. Functionally, regulates the ATPase activity of the NS3 helicase activity. NS4A allows NS3 helicase to conserve energy during unwinding. Its function is as follows. Functions as a signal peptide for NS4B and is required for the interferon antagonism activity of the latter. In terms of biological role, induces the formation of ER-derived membrane vesicles where the viral replication takes place. Inhibits interferon (IFN)-induced host STAT1 phosphorylation and nuclear translocation, thereby preventing the establishment of cellular antiviral state by blocking the IFN-alpha/beta pathway. Replicates the viral (+) and (-) RNA genome, and performs the capping of genomes in the cytoplasm. NS5 methylates viral RNA cap at guanine N-7 and ribose 2'-O positions. Besides its role in RNA genome replication, also prevents the establishment of cellular antiviral state by blocking the interferon-alpha/beta (IFN-alpha/beta) signaling pathway. IFN-I induces binding of NS5 to host IFN-activated transcription factor STAT2, preventing its transcriptional activity. Host TRIM23 is the E3 ligase that interacts with and polyubiquitinates NS5 to promote its binding to STAT2 and trigger IFN-I signaling inhibition. This chain is Genome polyprotein, found in Aedes aegypti (Yellowfever mosquito).